Consider the following 398-residue polypeptide: Acetate kinase 2 (398 aa).

Asparagine 7 contributes to the Mg(2+) binding site. Lysine 14 contacts ATP. Residue arginine 91 coordinates substrate. Catalysis depends on aspartate 148, which acts as the Proton donor/acceptor. ATP contacts are provided by residues 208–212, 283–285, and 331–335; these read HLGNG, DFR, and GVGEN. Glutamate 384 contacts Mg(2+).

The protein belongs to the acetokinase family. Homodimer. It depends on Mg(2+) as a cofactor. Requires Mn(2+) as cofactor.

It localises to the cytoplasm. The enzyme catalyses acetate + ATP = acetyl phosphate + ADP. It participates in metabolic intermediate biosynthesis; acetyl-CoA biosynthesis; acetyl-CoA from acetate: step 1/2. Functionally, catalyzes the formation of acetyl phosphate from acetate and ATP. Can also catalyze the reverse reaction. The protein is Acetate kinase 2 of Clostridium perfringens (strain 13 / Type A).